We begin with the raw amino-acid sequence, 453 residues long: Chromosomal replication initiator protein DnaA (453 aa).

The segment at 1–74 (MKEKQFWNRI…GFEIYDAEIT (74 aa)) is domain I, interacts with DnaA modulators. The tract at residues 74 to 113 (TPHYIFTKPQDTTSSQVEEATNLTLYNYSPKLVSIPYSDT) is domain II. The tract at residues 114 to 331 (GLKEKYTFDN…GAINDITLIA (218 aa)) is domain III, AAA+ region. ATP is bound by residues Gly158, Gly160, Lys161, and Thr162. A domain IV, binds dsDNA region spans residues 332 to 453 (RVKKIKDITI…EIESIKKKIK (122 aa)).

The protein belongs to the DnaA family. As to quaternary structure, oligomerizes as a right-handed, spiral filament on DNA at oriC.

The protein localises to the cytoplasm. Its function is as follows. Plays an essential role in the initiation and regulation of chromosomal replication. ATP-DnaA binds to the origin of replication (oriC) to initiate formation of the DNA replication initiation complex once per cell cycle. Binds the DnaA box (a 9 base pair repeat at the origin) and separates the double-stranded (ds)DNA. Forms a right-handed helical filament on oriC DNA; dsDNA binds to the exterior of the filament while single-stranded (ss)DNA is stabiized in the filament's interior. The ATP-DnaA-oriC complex binds and stabilizes one strand of the AT-rich DNA unwinding element (DUE), permitting loading of DNA polymerase. After initiation quickly degrades to an ADP-DnaA complex that is not apt for DNA replication. Binds acidic phospholipids. The polypeptide is Chromosomal replication initiator protein DnaA (Streptococcus pneumoniae serotype 19F (strain G54)).